An 896-amino-acid polypeptide reads, in one-letter code: Putative mannosylglycerate hydrolase (896 aa).

A divalent metal cation is bound by residues H12, D14, D125, and H348. Catalysis depends on D125, which acts as the Nucleophile.

Belongs to the glycosyl hydrolase 38 family. Requires a divalent metal cation as cofactor.

It carries out the reaction (2R)-2-O-(6-phospho-alpha-D-mannosyl)-glycerate + H2O = alpha-D-mannose 6-phosphate + (R)-glycerate. Functionally, may hydrolyze 6-phospho-mannosyl-D-glycerate to mannose-6-phosphate and glycerate. The polypeptide is Putative mannosylglycerate hydrolase (mngB) (Halalkalibacterium halodurans (strain ATCC BAA-125 / DSM 18197 / FERM 7344 / JCM 9153 / C-125) (Bacillus halodurans)).